Reading from the N-terminus, the 725-residue chain is Glutamine-dependent NAD(+) synthetase (725 aa).

The 271-residue stretch at 5–275 (VTVATCALNQ…VEVLTATLDL (271 aa)) folds into the CN hydrolase domain. The active-site Proton acceptor; for glutaminase activity is the Glu45. The active-site For glutaminase activity is Lys114. Cys175 serves as the catalytic Nucleophile; for glutaminase activity. The ligase stretch occupies residues 325 to 706 (YHRPEEEISL…KASQTREEQV (382 aa)). ATP is bound at residue 355–362 (PLSGGVDS). Residue Ser357 is part of the active site.

It in the C-terminal section; belongs to the NAD synthetase family. In terms of assembly, homohexamer. Highly expressed in small intestine, kidney, liver and testis. Weakly expressed in skeletal muscle, spleen, lung, heart and brain.

The enzyme catalyses deamido-NAD(+) + L-glutamine + ATP + H2O = L-glutamate + AMP + diphosphate + NAD(+) + H(+). The protein operates within cofactor biosynthesis; NAD(+) biosynthesis; NAD(+) from deamido-NAD(+) (L-Gln route): step 1/1. Functionally, catalyzes the final step of the nicotinamide adenine dinucleotide (NAD) de novo synthesis pathway, the ATP-dependent amidation of deamido-NAD using L-glutamine as a nitrogen source. The sequence is that of Glutamine-dependent NAD(+) synthetase (Nadsyn1) from Mus musculus (Mouse).